The primary structure comprises 489 residues: ERO1-like protein alpha (489 aa).

Residues M1 to A20 form the signal peptide. Intrachain disulfides connect C27-C40, C29-C38, C77-C382, C86-C91, C86-C123, C91-C96, C200-C232, and C385-C388. Residues R179, T181, and W192 each contribute to the FAD site. FAD is bound by residues S243 and H246. N271 carries N-linked (GlcNAc...) asparagine glycosylation. The FAD site is built by R278 and R291. N-linked (GlcNAc...) asparagine glycosylation occurs at N375.

It belongs to the EROs family. Predominantly monomer. May function both as a monomer and a homodimer. It depends on FAD as a cofactor. The Cys-86/Cys-91 and Cys-385/Cys-388 disulfide bonds constitute the redox-active center. The Cys-86/Cys-91 disulfide bond may accept electron from protein disulfide isomerase (PDI) and funnel them to the active site disulfide Cys-385/Cys-388.

The protein localises to the endoplasmic reticulum membrane. Enzyme activity is tightly regulated to prevent the accumulation of reactive oxygen species in the endoplasmic reticulum. Reversibly down-regulated by the formation of disulfide bonds between the active site Cys-86 and Cys-123, and between Cys-91 and Cys-96. Glutathione may be required to regulate its activity in the endoplasmic reticulum. Oxidoreductase involved in disulfide bond formation in the endoplasmic reticulum. Efficiently reoxidizes P4HB/PDI, the enzyme catalyzing protein disulfide formation, in order to allow P4HB to sustain additional rounds of disulfide formation. Following P4HB reoxidation, passes its electrons to molecular oxygen via FAD, leading to the production of reactive oxygen species (ROS) in the cell. Required for the folding of immunoglobulins. This is ERO1-like protein alpha from Danio rerio (Zebrafish).